Here is a 163-residue protein sequence, read N- to C-terminus: I-Kappa-B like protein N3 (163 aa).

ANK repeat units follow at residues 62 to 95 and 100 to 130; these read LGDT…NLNT and NGDT…NLQT.

This sequence belongs to the polydnaviridae I-Kappa-B like protein family.

In terms of biological role, suppresses the host immune response through NF-kappa-B inactivation. Possesses ankyrin repeat domains required for NF-kappa-B binding but lacks the regulatory regions required for dissociation from NF-kappa-B and degradation. Therefore, prevents host NF-kappa-B release and subsequent activation. The protein is I-Kappa-B like protein N3 (N6) of Microplitis demolitor (Parasitoid wasp).